Consider the following 413-residue polypeptide: Glutamyl-tRNA reductase (413 aa).

Residues 49–52, serine 105, 110–112, and glutamine 116 contribute to the substrate site; these read TCNR and EPQ. Residue cysteine 50 is the Nucleophile of the active site. NADP(+) is bound at residue 185–190; sequence GAGETI.

Belongs to the glutamyl-tRNA reductase family. Homodimer.

The catalysed reaction is (S)-4-amino-5-oxopentanoate + tRNA(Glu) + NADP(+) = L-glutamyl-tRNA(Glu) + NADPH + H(+). Its pathway is porphyrin-containing compound metabolism; protoporphyrin-IX biosynthesis; 5-aminolevulinate from L-glutamyl-tRNA(Glu): step 1/2. Functionally, catalyzes the NADPH-dependent reduction of glutamyl-tRNA(Glu) to glutamate 1-semialdehyde (GSA). This chain is Glutamyl-tRNA reductase, found in Coxiella burnetii (strain Dugway 5J108-111).